The chain runs to 551 residues: Tetrachloroethene reductive dehalogenase (551 aa).

The tat-type signal signal peptide spans 1-39 (MGEINRRNFLKASMLGAAAAAVASASVVKGVVSPLVADA). Positions 411-440 (PRKFGVREFCRLCKKCADACPAQAISHEKD) constitute a 4Fe-4S ferredoxin-type 1 domain. The [4Fe-4S] cluster site is built by Cys420, Cys423, Cys426, Cys430, Cys467, Cys478, Cys481, and Cys485. The 19-residue stretch at 478-496 (CSNCVAVCSWNKVETWNHD) folds into the 4Fe-4S ferredoxin-type 2 domain.

Belongs to the PceA family. The cofactor is [4Fe-4S] cluster. Corrinoid is required as a cofactor. Post-translationally, predicted to be exported by the Tat system. The position of the signal peptide cleavage has been experimentally proven.

The protein localises to the cell membrane. The catalysed reaction is trichloroethene + chloride + A + H(+) = tetrachloroethene + AH2. The enzyme catalyses trichloroethene + AH2 = (Z)-1,2-dichloroethene + chloride + A + H(+). Its function is as follows. Catalyzes the reductive dechlorination of tetrachloroethene (PCE) to trichloroethene (TCE) and of trichloroethene to cis-1,2-dichloroethene (DCE). Reduced methyl viologen can act as the artificial electron donor. This is Tetrachloroethene reductive dehalogenase from Desulfitobacterium hafniense (Desulfitobacterium frappieri).